Reading from the N-terminus, the 512-residue chain is Glucagon-like peptide 2 receptor (512 aa).

The Extracellular portion of the chain corresponds to 1-135 (MRRLWGPGTP…KQNVDHYHHT (135 aa)). Intrachain disulfides connect C43/C65, C56/C97, and C78/C119. An N-linked (GlcNAc...) asparagine glycan is attached at N73. A helical membrane pass occupies residues 136–160 (LLSTLQLMYTVGYSLSLISLFLALT). The Cytoplasmic portion of the chain corresponds to 161-172 (LFLFLRKLHCTR). Residues 173–197 (NYIHMNLFASFILRALVVLVKDMVF) traverse the membrane as a helical segment. The Extracellular segment spans residues 198–223 (YNSYSRRPDSESGWMSYLSEISASCR). The helical transmembrane segment at 224–247 (SVQVLLHYFVGTNHLWLLVEGLYL) threads the bilayer. Over 248-261 (HALLEPTVLPERRL) the chain is Cytoplasmic. A helical transmembrane segment spans residues 262-283 (WPKYLVVGWAFPMLFVIPWIFV). Residues 284–301 (RASLENTGCWAVNENKKI) lie on the Extracellular side of the membrane. Residues 302–324 (WWIIRGPILLCVTVNFFIFLKIL) traverse the membrane as a helical segment. Over 325–348 (KLLISKFRAHQMCFRDYKYRLAKS) the chain is Cytoplasmic. Residues 349-367 (TLLLILLMGVHEFLFTFFT) traverse the membrane as a helical segment. At 368-379 (DDQVQGFSRLIR) the chain is on the extracellular side. A helical transmembrane segment spans residues 380–400 (LFIQLTLSSFHGFLVALQYGF). Topologically, residues 401 to 512 (ASREVKAELR…MEEILEESEI (112 aa)) are cytoplasmic. Positions 458-494 (SGVSSHLTAGNLRDHGAQPHRGRGAWPRASSLSESSE) are disordered.

Belongs to the G-protein coupled receptor 2 family.

The protein resides in the cell membrane. In terms of biological role, this is a receptor for glucagon-like peptide 2. The activity of this receptor is mediated by G proteins which activate adenylyl cyclase. The polypeptide is Glucagon-like peptide 2 receptor (Glp2r) (Mus musculus (Mouse)).